Consider the following 922-residue polypeptide: DNA gyrase subunit A (922 aa).

The 501-residue stretch at 34 to 534 (LPDVRDGLKP…SSAEINIEDL (501 aa)) folds into the Topo IIA-type catalytic domain. Residue Tyr-122 is the O-(5'-phospho-DNA)-tyrosine intermediate of the active site. The GyrA-box motif lies at 561-567 (QRRGGRG). Disordered stretches follow at residues 715–763 (MQPM…VRPM) and 899–922 (IDGEVSEGTDTAPDAGSAAADPEE). A compositionally biased stretch (acidic residues) spans 723 to 743 (DDVDGDDESVIDAGNDDDGSD).

Belongs to the type II topoisomerase GyrA/ParC subunit family. Heterotetramer, composed of two GyrA and two GyrB chains. In the heterotetramer, GyrA contains the active site tyrosine that forms a transient covalent intermediate with DNA, while GyrB binds cofactors and catalyzes ATP hydrolysis.

It localises to the cytoplasm. It catalyses the reaction ATP-dependent breakage, passage and rejoining of double-stranded DNA.. A type II topoisomerase that negatively supercoils closed circular double-stranded (ds) DNA in an ATP-dependent manner to modulate DNA topology and maintain chromosomes in an underwound state. Negative supercoiling favors strand separation, and DNA replication, transcription, recombination and repair, all of which involve strand separation. Also able to catalyze the interconversion of other topological isomers of dsDNA rings, including catenanes and knotted rings. Type II topoisomerases break and join 2 DNA strands simultaneously in an ATP-dependent manner. The sequence is that of DNA gyrase subunit A from Aeromonas salmonicida.